The primary structure comprises 61 residues: uncharacterized protein (61 aa).

This is an uncharacterized protein from Homo sapiens (Human).